The following is a 410-amino-acid chain: Solute carrier family 52, riboflavin transporter, member 3 (410 aa).

A run of 3 helical transmembrane segments spans residues 3–23 (ILIY…INGL), 40–60 (LPSY…LVTL), and 73–93 (VVIY…AFFL). Asn157 is a glycosylation site (N-linked (GlcNAc...) asparagine). The next 6 membrane-spanning stretches (helical) occupy residues 158 to 178 (FTTE…LAAF), 239 to 259 (FQLT…NGLL), 277 to 297 (LSAA…MFFP), 301 to 321 (LVFL…NMAM), 334 to 354 (ALGE…LSYV), and 369 to 389 (ALVW…VIMF).

This sequence belongs to the riboflavin transporter family.

Its subcellular location is the cell membrane. The enzyme catalyses riboflavin(in) = riboflavin(out). In terms of biological role, plasma membrane transporter mediating the uptake by cells of the water soluble vitamin B2/riboflavin that plays a key role in biochemical oxidation-reduction reactions of the carbohydrate, lipid, and amino acid metabolism. The polypeptide is Solute carrier family 52, riboflavin transporter, member 3 (slc52a3) (Osmerus mordax (Rainbow smelt)).